A 323-amino-acid chain; its full sequence is Aldo-keto reductase family 1 member C2 (323 aa).

NADP(+) is bound by residues 20-24 (GFGTY) and aspartate 50. Substrate is bound at residue tyrosine 24. Tyrosine 55 acts as the Proton donor in catalysis. Residue histidine 117 coordinates substrate. Residues 166–167 (SN), glutamine 190, and 216–222 (YSALGSH) contribute to the NADP(+) site. 2 residues coordinate substrate: histidine 222 and tryptophan 227. 270–280 (KSYNEQRIRQN) lines the NADP(+) pocket.

The protein belongs to the aldo/keto reductase family. As to expression, expressed in fetal testes. Expressed in fetal and adult adrenal glands.

It localises to the cytoplasm. The protein localises to the cytosol. The enzyme catalyses a 3alpha-hydroxysteroid + NADP(+) = a 3-oxosteroid + NADPH + H(+). It catalyses the reaction a 3alpha-hydroxysteroid + NAD(+) = a 3-oxosteroid + NADH + H(+). It carries out the reaction 5alpha-androstane-3alpha,17beta-diol + NADP(+) = 17beta-hydroxy-5alpha-androstan-3-one + NADPH + H(+). The catalysed reaction is 5alpha-androstane-3alpha,17beta-diol + NAD(+) = 17beta-hydroxy-5alpha-androstan-3-one + NADH + H(+). The enzyme catalyses 5alpha-androstane-3alpha,17beta-diol + NAD(+) = androsterone + NADH + H(+). It catalyses the reaction 17beta-estradiol + NADP(+) = estrone + NADPH + H(+). It carries out the reaction 17beta-estradiol + NAD(+) = estrone + NADH + H(+). The catalysed reaction is (20S)-hydroxypregn-4-en-3-one + NADP(+) = progesterone + NADPH + H(+). The enzyme catalyses (20S)-hydroxypregn-4-en-3-one + NAD(+) = progesterone + NADH + H(+). It catalyses the reaction androsterone + NADP(+) = 5alpha-androstan-3,17-dione + NADPH + H(+). It carries out the reaction (3beta,5alpha,17beta)-3-hydroxy-androstan-17-yl sulfate + NADP(+) = 5alpha-dihydrotestosterone sulfate + NADPH + H(+). The catalysed reaction is (1R,2R)-1,2-dihydrobenzene-1,2-diol + NADP(+) = catechol + NADPH + H(+). The enzyme catalyses (S)-indan-1-ol + NAD(+) = indan-1-one + NADH + H(+). It catalyses the reaction (S)-indan-1-ol + NADP(+) = indan-1-one + NADPH + H(+). The protein operates within steroid metabolism. With respect to regulation, inhibited by hexestrol with an IC(50) of 2.8 uM, 1,10-phenanthroline with an IC(50) of 2100 uM, 1,7-phenanthroline with an IC(50) of 1500 uM, flufenamic acid with an IC(50) of 0.9 uM, indomethacin with an IC(50) of 75 uM, ibuprofen with an IC(50) of 6.9 uM, lithocholic acid with an IC(50) of 0.07 uM, ursodeoxycholic acid with an IC(50) of 0.08 uM and chenodeoxycholic acid with an IC(50) of 0.13 uM. The oxidation reaction is inhibited by low micromolar concentrations of NADPH. Functionally, cytosolic aldo-keto reductase that catalyzes the NADH and NADPH-dependent reduction of ketosteroids to hydroxysteroids. Most probably acts as a reductase in vivo since the oxidase activity measured in vitro is inhibited by physiological concentrations of NADPH. Displays a broad positional specificity acting on positions 3, 17 and 20 of steroids and regulates the metabolism of hormones like estrogens and androgens. Works in concert with the 5-alpha/5-beta-steroid reductases to convert steroid hormones into the 3-alpha/5-alpha and 3-alpha/5-beta-tetrahydrosteroids. Catalyzes the inactivation of the most potent androgen 5-alpha-dihydrotestosterone (5-alpha-DHT) to 5-alpha-androstane-3-alpha,17-beta-diol (3-alpha-diol). Also specifically able to produce 17beta-hydroxy-5alpha-androstan-3-one/5alphaDHT. May also reduce conjugated steroids such as 5alpha-dihydrotestosterone sulfate. Displays affinity for bile acids. The chain is Aldo-keto reductase family 1 member C2 (AKR1C2) from Homo sapiens (Human).